We begin with the raw amino-acid sequence, 469 residues long: 3-isopropylmalate dehydratase large subunit (469 aa).

3 residues coordinate [4Fe-4S] cluster: Cys-347, Cys-410, and Cys-413.

Belongs to the aconitase/IPM isomerase family. LeuC type 1 subfamily. Heterodimer of LeuC and LeuD. [4Fe-4S] cluster serves as cofactor.

It carries out the reaction (2R,3S)-3-isopropylmalate = (2S)-2-isopropylmalate. It participates in amino-acid biosynthesis; L-leucine biosynthesis; L-leucine from 3-methyl-2-oxobutanoate: step 2/4. Functionally, catalyzes the isomerization between 2-isopropylmalate and 3-isopropylmalate, via the formation of 2-isopropylmaleate. The protein is 3-isopropylmalate dehydratase large subunit of Cupriavidus pinatubonensis (strain JMP 134 / LMG 1197) (Cupriavidus necator (strain JMP 134)).